The primary structure comprises 366 residues: UDP-N-acetylglucosamine 2-epimerase (366 aa).

Residue His-206 is part of the active site.

It belongs to the UDP-N-acetylglucosamine 2-epimerase family. In terms of assembly, homodimer.

It is found in the cytoplasm. It carries out the reaction UDP-N-acetyl-alpha-D-glucosamine = UDP-N-acetyl-alpha-D-mannosamine. Catalyzes the reversible epimerization at C-2 of UDP-N-acetylglucosamine (UDP-GlcNAc) to produce UDP-N-acetylmannosamine (UDP-ManNAc), the activated donor of ManNAc residues. This chain is UDP-N-acetylglucosamine 2-epimerase (wecB), found in Methanococcus maripaludis (strain DSM 14266 / JCM 13030 / NBRC 101832 / S2 / LL).